Here is a 334-residue protein sequence, read N- to C-terminus: Malate dehydrogenase, mitochondrial (334 aa).

Residues 1-17 (MLSRVAKRAFSSTVANP) constitute a mitochondrion transit peptide. NAD(+)-binding positions include 24-30 (GAGGGIG) and aspartate 50. The substrate site is built by arginine 99 and arginine 105. NAD(+) contacts are provided by residues asparagine 112 and 135–137 (ISN). 2 residues coordinate substrate: asparagine 137 and arginine 171. Serine 177 bears the Phosphoserine mark. Histidine 195 acts as the Proton acceptor in catalysis. The residue at position 199 (threonine 199) is a Phosphothreonine. Residue methionine 245 coordinates NAD(+).

Belongs to the LDH/MDH superfamily. MDH type 1 family. Homodimer.

Its subcellular location is the mitochondrion matrix. The catalysed reaction is (S)-malate + NAD(+) = oxaloacetate + NADH + H(+). The protein is Malate dehydrogenase, mitochondrial (MDH1) of Saccharomyces cerevisiae (strain ATCC 204508 / S288c) (Baker's yeast).